The sequence spans 365 residues: sn-glycerol-3-phosphate import ATP-binding protein UgpC (365 aa).

The region spanning 4 to 234 is the ABC transporter domain; that stretch reads LSLRNVQKHY…PASTFVAGFI (231 aa). An ATP-binding site is contributed by 36-43; it reads GPSGCGKS.

The protein belongs to the ABC transporter superfamily. sn-glycerol-3-phosphate importer (TC 3.A.1.1.3) family. The complex is composed of two ATP-binding proteins (UgpC), two transmembrane proteins (UgpA and UgpE) and a solute-binding protein (UgpB).

It localises to the cell inner membrane. The catalysed reaction is sn-glycerol 3-phosphate(out) + ATP + H2O = sn-glycerol 3-phosphate(in) + ADP + phosphate + H(+). In terms of biological role, part of the ABC transporter complex UgpBAEC involved in sn-glycerol-3-phosphate (G3P) import. Responsible for energy coupling to the transport system. The protein is sn-glycerol-3-phosphate import ATP-binding protein UgpC of Ralstonia nicotianae (strain ATCC BAA-1114 / GMI1000) (Ralstonia solanacearum).